Reading from the N-terminus, the 883-residue chain is AP-5 complex subunit beta-1 (883 aa).

In terms of assembly, probably part of the adaptor protein complex 5 (AP-5).

In terms of biological role, as part of AP-5, a probable fifth adaptor protein complex, it may be involved in endosomal transport. This chain is AP-5 complex subunit beta-1 (ap5b1), found in Xenopus tropicalis (Western clawed frog).